A 911-amino-acid chain; its full sequence is Protein translocase subunit SecA (911 aa).

ATP-binding positions include Gln-90, Gly-108–Thr-112, and Asp-515. Residues Cys-891, Cys-893, Cys-902, and His-903 each contribute to the Zn(2+) site.

This sequence belongs to the SecA family. Monomer and homodimer. Part of the essential Sec protein translocation apparatus which comprises SecA, SecYEG and auxiliary proteins SecDF-YajC and YidC. Zn(2+) serves as cofactor.

It is found in the cell inner membrane. It localises to the cytoplasm. The catalysed reaction is ATP + H2O + cellular proteinSide 1 = ADP + phosphate + cellular proteinSide 2.. Part of the Sec protein translocase complex. Interacts with the SecYEG preprotein conducting channel. Has a central role in coupling the hydrolysis of ATP to the transfer of proteins into and across the cell membrane, serving both as a receptor for the preprotein-SecB complex and as an ATP-driven molecular motor driving the stepwise translocation of polypeptide chains across the membrane. In Blochmanniella pennsylvanica (strain BPEN), this protein is Protein translocase subunit SecA.